A 130-amino-acid chain; its full sequence is Small ribosomal subunit protein uS8 (130 aa).

This sequence belongs to the universal ribosomal protein uS8 family. As to quaternary structure, part of the 30S ribosomal subunit.

In terms of biological role, one of the primary rRNA binding proteins, it binds directly to 16S rRNA central domain where it helps coordinate assembly of the platform of the 30S subunit. The protein is Small ribosomal subunit protein uS8 of Methanosarcina barkeri (strain Fusaro / DSM 804).